A 341-amino-acid polypeptide reads, in one-letter code: Zinc transporter 6, chloroplastic (341 aa).

The chain crosses the membrane as a helical span at residues 28–48; the sequence is IVAVFAIFLTSVFGVWGPVLL. At 49-61 the chain is on the cytoplasmic side; the sequence is AKYFHGKPLYDKA. Residues 62-82 form a helical membrane-spanning segment; the sequence is ILVIKCFAAGVILSTSLVHVL. Over 83–102 the chain is Lumenal; that stretch reads PEAFESLADCQVSSRHPWKD. A helical transmembrane segment spans residues 103–123; that stretch reads FPFAGLVTMIGAITALLVDLT. The Cytoplasmic portion of the chain corresponds to 124 to 179; that stretch reads ASEHMGHGGGGGGDGGMEYMPVGKAVGGLEMKEGKCGADLEIQENSEEEIVKMKQR. The chain crosses the membrane as a helical span at residues 180–200; sequence LVSQVLEIGIIFHSVIIGVTM. Over 201–211 the chain is Lumenal; sequence GMSQNKCTIRP. Residues 212 to 232 traverse the membrane as a helical segment; sequence LIAALSFHQIFEGLGLGGCIA. The Cytoplasmic portion of the chain corresponds to 233 to 243; the sequence is QAGFKAGTVVY. The chain crosses the membrane as a helical span at residues 244 to 264; sequence MCLMFAVTTPLGIVLGMVIFA. At 265–280 the chain is on the lumenal side; it reads ATGYDDQNPNALIMEG. The chain crosses the membrane as a helical span at residues 281–301; sequence LLGSFSSGILIYMALVDLIAL. Residues 302 to 320 are Cytoplasmic-facing; sequence DFFHNKMLTTCGESGSRLK. A helical transmembrane segment spans residues 321–341; it reads KLCFVALVLGSASMSLLALWA.

Belongs to the ZIP transporter (TC 2.A.5) family.

Its subcellular location is the plastid. It localises to the chloroplast thylakoid membrane. Functionally, may play a role in the transport of zinc in the plastids. The sequence is that of Zinc transporter 6, chloroplastic (ZIP6) from Arabidopsis thaliana (Mouse-ear cress).